A 343-amino-acid polypeptide reads, in one-letter code: Methionine import ATP-binding protein MetN 2 (343 aa).

The ABC transporter domain maps to 2–241 (IEFKDVTKTF…PQQAVTKRFV (240 aa)). Residue 38 to 45 (GYSGAGKS) participates in ATP binding.

It belongs to the ABC transporter superfamily. Methionine importer (TC 3.A.1.24) family. As to quaternary structure, the complex is composed of two ATP-binding proteins (MetN), two transmembrane proteins (MetI) and a solute-binding protein (MetQ).

The protein resides in the cell membrane. The enzyme catalyses L-methionine(out) + ATP + H2O = L-methionine(in) + ADP + phosphate + H(+). It carries out the reaction D-methionine(out) + ATP + H2O = D-methionine(in) + ADP + phosphate + H(+). Functionally, part of the ABC transporter complex MetNIQ involved in methionine import. Responsible for energy coupling to the transport system. In Lactiplantibacillus plantarum (strain ATCC BAA-793 / NCIMB 8826 / WCFS1) (Lactobacillus plantarum), this protein is Methionine import ATP-binding protein MetN 2.